The chain runs to 186 residues: Ribosome maturation factor RimM (186 aa).

One can recognise a PRC barrel domain in the interval 103–174 (PEEYHYSDLI…ELQVQPPPGL (72 aa)).

It belongs to the RimM family. Binds ribosomal protein uS19.

The protein localises to the cytoplasm. An accessory protein needed during the final step in the assembly of 30S ribosomal subunit, possibly for assembly of the head region. Essential for efficient processing of 16S rRNA. May be needed both before and after RbfA during the maturation of 16S rRNA. It has affinity for free ribosomal 30S subunits but not for 70S ribosomes. The protein is Ribosome maturation factor RimM of Synechococcus sp. (strain JA-3-3Ab) (Cyanobacteria bacterium Yellowstone A-Prime).